Reading from the N-terminus, the 344-residue chain is GTPase Obg (344 aa).

In terms of domain architecture, Obg spans 1–159 (MKFLDEAKVY…MWLILRLKLI (159 aa)). One can recognise an OBG-type G domain in the interval 160-327 (ADAGLVGLPN…ALRAIQAQLD (168 aa)). Residues 166 to 173 (GLPNAGKS), 191 to 195 (FTTLH), 212 to 215 (DIPG), 279 to 282 (SKAD), and 308 to 310 (SAA) contribute to the GTP site. Mg(2+)-binding residues include S173 and T193.

Belongs to the TRAFAC class OBG-HflX-like GTPase superfamily. OBG GTPase family. Monomer. The cofactor is Mg(2+).

The protein localises to the cytoplasm. In terms of biological role, an essential GTPase which binds GTP, GDP and possibly (p)ppGpp with moderate affinity, with high nucleotide exchange rates and a fairly low GTP hydrolysis rate. Plays a role in control of the cell cycle, stress response, ribosome biogenesis and in those bacteria that undergo differentiation, in morphogenesis control. The chain is GTPase Obg from Methylorubrum extorquens (strain CM4 / NCIMB 13688) (Methylobacterium extorquens).